We begin with the raw amino-acid sequence, 98 residues long: NADH-ubiquinone oxidoreductase chain 4L (98 aa).

The next 3 helical transmembrane spans lie at 1–21 (MSLV…GLLM), 29–49 (SLLC…LMIL), and 61–81 (IILL…LVMV).

The protein belongs to the complex I subunit 4L family. As to quaternary structure, core subunit of respiratory chain NADH dehydrogenase (Complex I) which is composed of 45 different subunits.

Its subcellular location is the mitochondrion inner membrane. It catalyses the reaction a ubiquinone + NADH + 5 H(+)(in) = a ubiquinol + NAD(+) + 4 H(+)(out). Functionally, core subunit of the mitochondrial membrane respiratory chain NADH dehydrogenase (Complex I) which catalyzes electron transfer from NADH through the respiratory chain, using ubiquinone as an electron acceptor. Part of the enzyme membrane arm which is embedded in the lipid bilayer and involved in proton translocation. This Ovis aries (Sheep) protein is NADH-ubiquinone oxidoreductase chain 4L (MT-ND4L).